We begin with the raw amino-acid sequence, 469 residues long: Glutamate--tRNA ligase (469 aa).

Residues 9 to 19 (PSPTGMFHVGG) carry the 'HIGH' region motif. 4 residues coordinate Zn(2+): Cys100, Cys102, Cys122, and Asp124. A 'KMSKS' region motif is present at residues 232 to 236 (KLSKR). Position 235 (Lys235) interacts with ATP.

Belongs to the class-I aminoacyl-tRNA synthetase family. Glutamate--tRNA ligase type 1 subfamily. As to quaternary structure, monomer. Zn(2+) is required as a cofactor.

It is found in the cytoplasm. The enzyme catalyses tRNA(Glu) + L-glutamate + ATP = L-glutamyl-tRNA(Glu) + AMP + diphosphate. Functionally, catalyzes the attachment of glutamate to tRNA(Glu) in a two-step reaction: glutamate is first activated by ATP to form Glu-AMP and then transferred to the acceptor end of tRNA(Glu). This is Glutamate--tRNA ligase from Salinispora arenicola (strain CNS-205).